The sequence spans 96 residues: Nucleoid-associated protein CCA_00330 (96 aa).

Belongs to the YbaB/EbfC family. Homodimer.

The protein localises to the cytoplasm. Its subcellular location is the nucleoid. Binds to DNA and alters its conformation. May be involved in regulation of gene expression, nucleoid organization and DNA protection. The protein is Nucleoid-associated protein CCA_00330 of Chlamydia caviae (strain ATCC VR-813 / DSM 19441 / 03DC25 / GPIC) (Chlamydophila caviae).